A 199-amino-acid polypeptide reads, in one-letter code: Holliday junction branch migration complex subunit RuvA (199 aa).

A domain I region spans residues 1–63 (MIGCLIGEVF…EDAQQLYGFS (63 aa)). The segment at 64 to 142 (DAQEKTIFRT…TLAQGTSSAA (79 aa)) is domain II. Positions 143 to 150 (ALPQIQFV) are flexible linker. The domain III stretch occupies residues 150–199 (VSNSPVAEAEAALQSLGYKPLEAQKAVAAVKADYTESADIIRAALKSMMK).

This sequence belongs to the RuvA family. As to quaternary structure, homotetramer. Forms an RuvA(8)-RuvB(12)-Holliday junction (HJ) complex. HJ DNA is sandwiched between 2 RuvA tetramers; dsDNA enters through RuvA and exits via RuvB. An RuvB hexamer assembles on each DNA strand where it exits the tetramer. Each RuvB hexamer is contacted by two RuvA subunits (via domain III) on 2 adjacent RuvB subunits; this complex drives branch migration. In the full resolvosome a probable DNA-RuvA(4)-RuvB(12)-RuvC(2) complex forms which resolves the HJ.

The protein resides in the cytoplasm. The RuvA-RuvB-RuvC complex processes Holliday junction (HJ) DNA during genetic recombination and DNA repair, while the RuvA-RuvB complex plays an important role in the rescue of blocked DNA replication forks via replication fork reversal (RFR). RuvA specifically binds to HJ cruciform DNA, conferring on it an open structure. The RuvB hexamer acts as an ATP-dependent pump, pulling dsDNA into and through the RuvAB complex. HJ branch migration allows RuvC to scan DNA until it finds its consensus sequence, where it cleaves and resolves the cruciform DNA. The chain is Holliday junction branch migration complex subunit RuvA from Acinetobacter baumannii (strain SDF).